Reading from the N-terminus, the 259-residue chain is MSKYKLIMLRHGEGAWNKENRFCSWVDQKLNSEGMEEARNCGKQLKALNFEFDLVFTSVLNRSIHTAWLILEELGQEWVPVESSWRLNERHYGALIGLNREKMALNHGEEQVRIWRRSYNVTPPPIEESHPYYHEIYSDRRYRVCDVPLDQLPRSESLKDVLERLLPYWNERIAPEVLRGKTVLISAHGNSSRALLKHLEGISDEDIINITLPTGVPILLELDENLRAVGPHQFLGDQEAIQAAIKKVEDQGKVKRAEK.

Serine 2 carries the N-acetylserine modification. Substrate-binding positions include 10 to 17 (RHGEGAWN), 23 to 24 (CS), arginine 62, 89 to 92 (ERHY), arginine 100, and 116 to 117 (RR). Histidine 11 functions as the Tele-phosphohistidine intermediate in the catalytic mechanism. Residue glutamate 89 is the Proton donor/acceptor of the active site. Threonine 122 carries the phosphothreonine modification. 189-190 (GN) contributes to the substrate binding site.

Belongs to the phosphoglycerate mutase family. BPG-dependent PGAM subfamily. Homodimer. Expressed in red blood cells.

The enzyme catalyses (2R)-3-phospho-glyceroyl phosphate = (2R)-2,3-bisphosphoglycerate + H(+). The catalysed reaction is (2R)-2-phosphoglycerate = (2R)-3-phosphoglycerate. With respect to regulation, at alkaline pH BPGM favors the synthase reaction; however, at lower pH the phosphatase reaction is dominant. Inhibited by citrate. Its function is as follows. Plays a major role in regulating hemoglobin oxygen affinity by controlling the levels of its allosteric effector 2,3-bisphosphoglycerate (2,3-BPG). Also exhibits mutase (EC 5.4.2.11) activity. The sequence is that of Bisphosphoglycerate mutase (BPGM) from Oryctolagus cuniculus (Rabbit).